The following is a 525-amino-acid chain: GMP synthase [glutamine-hydrolyzing] (525 aa).

The Glutamine amidotransferase type-1 domain maps to 12–203 (TVLVVDFGAQ…LYRGAGLTPS (192 aa)). Catalysis depends on cysteine 89, which acts as the Nucleophile. Catalysis depends on residues histidine 177 and glutamate 179. A GMPS ATP-PPase domain is found at 204–399 (WTTGNVIDEQ…LGLPDEIVQR (196 aa)). 231 to 237 (SGGVDSA) contacts ATP.

In terms of assembly, homodimer.

The catalysed reaction is XMP + L-glutamine + ATP + H2O = GMP + L-glutamate + AMP + diphosphate + 2 H(+). It functions in the pathway purine metabolism; GMP biosynthesis; GMP from XMP (L-Gln route): step 1/1. Functionally, catalyzes the synthesis of GMP from XMP. This is GMP synthase [glutamine-hydrolyzing] from Streptomyces avermitilis (strain ATCC 31267 / DSM 46492 / JCM 5070 / NBRC 14893 / NCIMB 12804 / NRRL 8165 / MA-4680).